A 190-amino-acid chain; its full sequence is Somatotropin (190 aa).

His-19 serves as a coordination point for Zn(2+). Cys-52 and Cys-163 are oxidised to a cystine. Glu-172 contributes to the Zn(2+) binding site. Cys-180 and Cys-188 are joined by a disulfide.

The protein belongs to the somatotropin/prolactin family.

It is found in the secreted. Growth hormone plays an important role in growth control and involved in the regulation of several anabolic processes. This chain is Somatotropin (GH), found in Crocodylus novaeguineae (Crocodile).